The chain runs to 426 residues: Serine--tRNA ligase (426 aa).

L-serine is bound at residue 233–235 (TAE). 264–266 (RSE) provides a ligand contact to ATP. Glutamate 287 contacts L-serine. Residue 351–354 (EISS) coordinates ATP. Position 387 (serine 387) interacts with L-serine.

The protein belongs to the class-II aminoacyl-tRNA synthetase family. Type-1 seryl-tRNA synthetase subfamily. As to quaternary structure, homodimer. The tRNA molecule binds across the dimer.

It localises to the cytoplasm. It catalyses the reaction tRNA(Ser) + L-serine + ATP = L-seryl-tRNA(Ser) + AMP + diphosphate + H(+). The enzyme catalyses tRNA(Sec) + L-serine + ATP = L-seryl-tRNA(Sec) + AMP + diphosphate + H(+). It participates in aminoacyl-tRNA biosynthesis; selenocysteinyl-tRNA(Sec) biosynthesis; L-seryl-tRNA(Sec) from L-serine and tRNA(Sec): step 1/1. Catalyzes the attachment of serine to tRNA(Ser). Is also able to aminoacylate tRNA(Sec) with serine, to form the misacylated tRNA L-seryl-tRNA(Sec), which will be further converted into selenocysteinyl-tRNA(Sec). This chain is Serine--tRNA ligase, found in Pseudomonas savastanoi pv. phaseolicola (strain 1448A / Race 6) (Pseudomonas syringae pv. phaseolicola (strain 1448A / Race 6)).